The sequence spans 495 residues: WD repeat-containing protein 37 (495 aa).

Residues 1–34 (MPTESGSWAAARQTKQKRKSHSLSIKRTNSSEQD) form a disordered region. Over residues 22-31 (SLSIKRTNSS) the composition is skewed to polar residues. WD repeat units follow at residues 154–194 (GHRD…CLIK) and 197–236 (GHAG…PTPQ). The segment at 237-268 (PMADTSQISGEEEVDFSDKDENDGDGDASSDC) is disordered. Positions 246 to 264 (GEEEVDFSDKDENDGDGDA) are enriched in acidic residues. WD repeat units follow at residues 280–319 (SHQG…LVHS), 322–361 (GHDQ…IHSV), 366–404 (GHTD…SPIA), 407–446 (RTDS…LARL), and 453–494 (GHRR…LLQE).

The protein resides in the cytoplasm. The protein localises to the nucleus. This is WD repeat-containing protein 37 (wdr37) from Xenopus laevis (African clawed frog).